A 130-amino-acid polypeptide reads, in one-letter code: MIKSSSLRLRKRIKKQVTDGIAHIHASFNNTIVTISDRQGNTLGWATSGGSGFRGSRKSTPFAAQIAAERCAEIVQEYGVKNLEVMVKGPGPGRESAVRALNAAGFHIISIIDVTPIPHNGCRPAKKRRV.

Belongs to the universal ribosomal protein uS11 family. Part of the 30S ribosomal subunit. Interacts with proteins S7 and S18. Binds to IF-3.

Functionally, located on the platform of the 30S subunit, it bridges several disparate RNA helices of the 16S rRNA. Forms part of the Shine-Dalgarno cleft in the 70S ribosome. In Blochmanniella floridana, this protein is Small ribosomal subunit protein uS11.